Reading from the N-terminus, the 378-residue chain is Succinate--CoA ligase [GDP-forming] subunit beta (378 aa).

An ATP-grasp domain is found at 9-235 (KEILARYGVP…VEAEHPLEVE (227 aa)). Residues Lys-45, 52-54 (GRG), Val-94, and Glu-99 each bind GTP. Mg(2+)-binding residues include Asn-190 and Asp-204. Substrate is bound by residues Asn-255 and 312–314 (GIT).

The protein belongs to the succinate/malate CoA ligase beta subunit family. Heterotetramer of two alpha and two beta subunits. It depends on Mg(2+) as a cofactor.

The enzyme catalyses GTP + succinate + CoA = succinyl-CoA + GDP + phosphate. It catalyses the reaction succinate + ATP + CoA = succinyl-CoA + ADP + phosphate. The protein operates within carbohydrate metabolism; tricarboxylic acid cycle; succinate from succinyl-CoA (ligase route): step 1/1. Its function is as follows. Succinyl-CoA synthetase functions in the citric acid cycle (TCA), coupling the hydrolysis of succinyl-CoA to the synthesis of either ATP or GTP and thus represents the only step of substrate-level phosphorylation in the TCA. The beta subunit provides nucleotide specificity of the enzyme and binds the substrate succinate, while the binding sites for coenzyme A and phosphate are found in the alpha subunit. Can use either ATP or GTP, but prefers GTP. The protein is Succinate--CoA ligase [GDP-forming] subunit beta of Thermus thermophilus.